Reading from the N-terminus, the 263-residue chain is Phosphate import ATP-binding protein PstB (263 aa).

One can recognise an ABC transporter domain in the interval 17–258 (ISVKNLDFFY…PKRKETEDYI (242 aa)). 49–56 (GPSGCGKS) is an ATP binding site.

This sequence belongs to the ABC transporter superfamily. Phosphate importer (TC 3.A.1.7) family. In terms of assembly, the complex is composed of two ATP-binding proteins (PstB), two transmembrane proteins (PstC and PstA) and a solute-binding protein (PstS).

It is found in the cell inner membrane. It carries out the reaction phosphate(out) + ATP + H2O = ADP + 2 phosphate(in) + H(+). Part of the ABC transporter complex PstSACB involved in phosphate import. Responsible for energy coupling to the transport system. In Polaromonas sp. (strain JS666 / ATCC BAA-500), this protein is Phosphate import ATP-binding protein PstB.